An 827-amino-acid polypeptide reads, in one-letter code: Putative potassium transporter 12 (827 aa).

The interval 1–31 is disordered; it reads MEEIEEGSSNNSIRRVGTGSSDRRWVDGSEV. The Cytoplasmic segment spans residues 1 to 82; the sequence is MEEIEEGSSN…AGSHGHNLKD (82 aa). Residues 83-103 traverse the membrane as a helical segment; the sequence is LSLLTTLGIAFQTLGVVYGDM. Over 104–129 the chain is Extracellular; sequence GTSPLYVFSDVFSKVPIRSEVDVLGA. Residues 130 to 150 traverse the membrane as a helical segment; that stretch reads LSLVIYTIAVIPLAKYVFVVL. Residues 151–216 lie on the Cytoplasmic side of the membrane; that stretch reads KANDNGEGGT…ALETKGYLKT (66 aa). The helical transmembrane segment at 217-237 threads the bilayer; it reads LLLLLVLMGTSMIIGDGILTP. At 238 to 253 the chain is on the extracellular side; sequence AMSVMSAMSGLQGEVK. The helical transmembrane segment at 254–274 threads the bilayer; sequence GFGTNALVMSSIVILVALFSI. Residues 275 to 281 are Cytoplasmic-facing; that stretch reads QRFGTGK. The chain crosses the membrane as a helical span at residues 282 to 302; sequence VGFLFAPVLALWFFSLGAIGI. The Extracellular portion of the chain corresponds to 303-335; that stretch reads YNLLKYDFTVIRALNPFYIVLFFNKNSKQAWSA. The chain crosses the membrane as a helical span at residues 336-356; it reads LGGCVLCITGAEAMFADLGHF. Over 357 to 363 the chain is Cytoplasmic; that stretch reads SVRSIQM. Residues 364-384 form a helical membrane-spanning segment; the sequence is AFTCVVFPCLLLAYMGQAAYL. Topologically, residues 385-402 are extracellular; the sequence is TKHPEASARIFYDSVPKS. Residues 403 to 423 form a helical membrane-spanning segment; sequence LFWPVFVIATLAAMIASQAMI. Residues 424–454 are Cytoplasmic-facing; sequence SATFSCVKQAMALGCFPRLKIIHTSKKRIGQ. Residues 455–475 traverse the membrane as a helical segment; that stretch reads IYIPVINWFLMIMCILVVSIF. Residues 476-480 lie on the Extracellular side of the membrane; the sequence is RSTTH. 2 helical membrane-spanning segments follow: residues 481–501 and 502–522; these read IANA…VLVT and LVML…PLIF. The Extracellular portion of the chain corresponds to 523–536; that stretch reads GSVETIYLLAVLTK. A helical membrane pass occupies residues 537–557; sequence ILEGGWVPLVFATFFLTVMYI. Over 558 to 827 the chain is Cytoplasmic; the sequence is WNYGSVLKYQ…ILQAGMTYMV (270 aa). The interval 728-750 is disordered; the sequence is RSEPEQELDSEVLPSSSVGSSME. Positions 738–748 are enriched in low complexity; the sequence is EVLPSSSVGSS.

It belongs to the HAK/KUP transporter (TC 2.A.72.3) family.

The protein localises to the cell membrane. Putative potassium transporter. The chain is Putative potassium transporter 12 (POT12) from Arabidopsis thaliana (Mouse-ear cress).